The chain runs to 348 residues: Lysophosphatidic acid receptor 2 (348 aa).

Residues 1 to 30 are Extracellular-facing; sequence MGHCYYNETIGFFYNNSGKELSSHWRPKDV. N7 and N15 each carry an N-linked (GlcNAc...) asparagine glycan. The chain crosses the membrane as a helical span at residues 31–51; sequence VVVALGLTVSVLVLLTNLLVI. The Cytoplasmic segment spans residues 52 to 66; that stretch reads AAIASNRRFHQPIYY. Residues 67-87 traverse the membrane as a helical segment; that stretch reads LLGNLAAADLFAGVAYLFLMF. Residues 88–104 are Extracellular-facing; that stretch reads HTGPRTARLSLEGWFLR. The helical transmembrane segment at 105-124 threads the bilayer; sequence QGLLDTSLTASVATLLAIAV. The Cytoplasmic segment spans residues 125-143; sequence ERRRSVMAVQLHSRLPRGR. The helical transmembrane segment at 144–164 threads the bilayer; sequence VVMLIVGVWVAALGLGLLPAH. At 165-185 the chain is on the extracellular side; that stretch reads SWHCLCALDRCSRMAPLLSRS. The helical transmembrane segment at 186-206 threads the bilayer; sequence YLAVWALSSLLVFLLMVAVYT. Topologically, residues 207–239 are cytoplasmic; it reads RIFFYVRRRVQRMAEHVSCHPRYRETTLSLVKT. A helical transmembrane segment spans residues 240 to 260; that stretch reads VVIILGAFVVCWTPGQVVLLL. The Extracellular segment spans residues 261 to 276; sequence DGLGCKSCNVLAVEKY. A helical membrane pass occupies residues 277–294; sequence FLLLAEANSLVNAAVYSC. Residues 295–348 lie on the Cytoplasmic side of the membrane; it reads RDAEMRRTFRRLLCCACLRRSTRESAHYTSSAQGGASTRIMLPENGHPLMDSTL. C308 carries S-palmitoyl cysteine lipidation. Residues 345-348 carry the PDZ-binding motif; it reads DSTL.

This sequence belongs to the G-protein coupled receptor 1 family. Interacts with SLC9A3R2/NHERF2, MAGI3 and PLCB3. Interacts with RALA and GRK2.

The protein localises to the cell surface. The protein resides in the cell membrane. In terms of biological role, receptor for lysophosphatidic acid (LPA), a mediator of diverse cellular activities. Seems to be coupled to the G(i)/G(o), G(12)/G(13), and G(q) families of heteromeric G proteins. Plays a key role in phospholipase C-beta (PLC-beta) signaling pathway. Stimulates phospholipase C (PLC) activity in a manner that is independent of RALA activation. This Macaca fascicularis (Crab-eating macaque) protein is Lysophosphatidic acid receptor 2.